The following is a 423-amino-acid chain: Gamma-glutamyl phosphate reductase (423 aa).

Belongs to the gamma-glutamyl phosphate reductase family.

The protein resides in the cytoplasm. The catalysed reaction is L-glutamate 5-semialdehyde + phosphate + NADP(+) = L-glutamyl 5-phosphate + NADPH + H(+). It participates in amino-acid biosynthesis; L-proline biosynthesis; L-glutamate 5-semialdehyde from L-glutamate: step 2/2. Its function is as follows. Catalyzes the NADPH-dependent reduction of L-glutamate 5-phosphate into L-glutamate 5-semialdehyde and phosphate. The product spontaneously undergoes cyclization to form 1-pyrroline-5-carboxylate. The chain is Gamma-glutamyl phosphate reductase from Pseudomonas putida (strain W619).